Here is a 29-residue protein sequence, read N- to C-terminus: HSQGTFTSDYSKYLDSRRAQDFVQWLMST.

The protein belongs to the glucagon family.

It localises to the secreted. In terms of biological role, glucagon plays a key role in glucose metabolism and homeostasis. Regulates blood glucose by increasing gluconeogenesis and decreasing glycolysis. The sequence is that of Glucagon (GCG) from Meleagris gallopavo (Wild turkey).